The following is a 770-amino-acid chain: MDNVVDPWYINPSGFAKDTQDEEYVQHHDNVNPTIPPPDNYILNNENDDGLDNLLGMDYYNIDDLLTQELRDLDIPLVPSPKTGDGSSDKKNIDRTWNLGDENNKVSHYSKKSMSSHKRGLSGTAIFGFLGHNKTLSISSLQQSILNMSKDPQPMELINELGNHNTVKNNNDDFDHIRENDGENSYLSQVLLKQQEELRIALEKQKEVNEKLEKQLRDNQIQQEKLRKVLEEQEEVAQKLVSGATNSNSKPGSPVILKTPAMQNGRMKDNAIIVTTNSANGGYQFPPPTLISPRMSNTSINGSPSRKYHRQRYPNKSPESNGLNLFSSNSGYLRDSELLSFSPQNYNLNLDGLTYNDHNNTSDKNNNDKKNSTGDNIFRLFEKTSPGGLSISPRINGNSLRSPFLVGTDKSRDDRYAAGTFTPRTQLSPIHKKRESVVSTVSTISQLQDDTEPIHMRNTQNPTLRNANALASSSVLPPIPGSSNNTPIKNSLPQKHVFQHTPVKAPPKNGSNLAPLLNAPDLTDHQLEIKTPIRNNSHCEVESYPQVPPVTHDIHKSPTLHSTSPLPDEIIPRTTPMKITKKPTTLPPGTIDQYVKELPDKLFECLYPNCNKVFKRRYNIRSHIQTHLQDRPYSCDFPGCTKAFVRNHDLIRHKISHNAKKYICPCGKRFNREDALMVHRSRMICTGGKKLEHSINKKLTSPKKSLLDSPHDTSPVKETIARDKDGSVLMKMEEQLRDDMRKHGLLDPPPSTAAHEQNSNRTLSNETDAL.

The interval 77-97 (LVPSPKTGDGSSDKKNIDRTW) is disordered. Residues serine 80, serine 122, serine 247, serine 249, and serine 253 each carry the phosphoserine modification. Position 259 is a phosphothreonine (threonine 259). Residues 286-323 (PPPTLISPRMSNTSINGSPSRKYHRQRYPNKSPESNGL) form a disordered region. Over residues 294-304 (RMSNTSINGSP) the composition is skewed to polar residues. Phosphoserine is present on residues serine 385, serine 392, and serine 483. A phosphothreonine mark is found at threonine 486 and threonine 501. Phosphoserine is present on serine 564. C2H2-type zinc fingers lie at residues 603–627 (FECL…IQTH) and 633–657 (YSCD…KISH). A C2H2-type 3; atypical zinc finger spans residues 662–685 (YICPCGKRFNREDALMVHRSRMIC). Residues 699-770 (LTSPKKSLLD…RTLSNETDAL (72 aa)) form a disordered region. The segment covering 705 to 745 (SLLDSPHDTSPVKETIARDKDGSVLMKMEEQLRDDMRKHGL) has biased composition (basic and acidic residues). Phosphoserine is present on residues serine 709 and serine 714. The span at 754–770 (AHEQNSNRTLSNETDAL) shows a compositional bias: polar residues.

Its subcellular location is the nucleus. Its function is as follows. Plays a role in regulating basal-level expression of CUP1. Activates EGT2 transcription in the absence of SWI5. This Saccharomyces cerevisiae (strain ATCC 204508 / S288c) (Baker's yeast) protein is Metallothionein expression activator (ACE2).